The following is a 211-amino-acid chain: tRNA (guanine-N(7)-)-methyltransferase (211 aa).

S-adenosyl-L-methionine is bound by residues glutamate 37, aspartate 62, glutamate 89, and aspartate 112. Aspartate 112 is a catalytic residue. Substrate-binding residues include lysine 116 and aspartate 148.

The protein belongs to the class I-like SAM-binding methyltransferase superfamily. TrmB family.

It carries out the reaction guanosine(46) in tRNA + S-adenosyl-L-methionine = N(7)-methylguanosine(46) in tRNA + S-adenosyl-L-homocysteine. It functions in the pathway tRNA modification; N(7)-methylguanine-tRNA biosynthesis. Functionally, catalyzes the formation of N(7)-methylguanine at position 46 (m7G46) in tRNA. In Geobacter metallireducens (strain ATCC 53774 / DSM 7210 / GS-15), this protein is tRNA (guanine-N(7)-)-methyltransferase.